We begin with the raw amino-acid sequence, 445 residues long: Putative U-box domain-containing protein 47 (445 aa).

The U-box domain maps to 64–137; sequence EVPKEFICTL…KEWCLIHNFD (74 aa).

The catalysed reaction is S-ubiquitinyl-[E2 ubiquitin-conjugating enzyme]-L-cysteine + [acceptor protein]-L-lysine = [E2 ubiquitin-conjugating enzyme]-L-cysteine + N(6)-ubiquitinyl-[acceptor protein]-L-lysine.. It functions in the pathway protein modification; protein ubiquitination. In terms of biological role, functions as an E3 ubiquitin ligase. The sequence is that of Putative U-box domain-containing protein 47 (PUB47) from Arabidopsis thaliana (Mouse-ear cress).